The sequence spans 198 residues: Recombination protein RecR (198 aa).

The C4-type zinc-finger motif lies at 57 to 72 (CSSCGHITDKDPCYIC). The Toprim domain occupies 80-175 (SIICVVQDPK…KITRIAHGLP (96 aa)).

It belongs to the RecR family.

Functionally, may play a role in DNA repair. It seems to be involved in an RecBC-independent recombinational process of DNA repair. It may act with RecF and RecO. The sequence is that of Recombination protein RecR from Anoxybacillus flavithermus (strain DSM 21510 / WK1).